The following is a 243-amino-acid chain: Ribonuclease PH (243 aa).

Phosphate contacts are provided by residues R84 and 122 to 124; that span reads GTR.

It belongs to the RNase PH family. In terms of assembly, homohexameric ring arranged as a trimer of dimers.

It catalyses the reaction tRNA(n+1) + phosphate = tRNA(n) + a ribonucleoside 5'-diphosphate. In terms of biological role, phosphorolytic 3'-5' exoribonuclease that plays an important role in tRNA 3'-end maturation. Removes nucleotide residues following the 3'-CCA terminus of tRNAs; can also add nucleotides to the ends of RNA molecules by using nucleoside diphosphates as substrates, but this may not be physiologically important. Probably plays a role in initiation of 16S rRNA degradation (leading to ribosome degradation) during starvation. In Bdellovibrio bacteriovorus (strain ATCC 15356 / DSM 50701 / NCIMB 9529 / HD100), this protein is Ribonuclease PH.